The chain runs to 394 residues: MGIKSLYQIISENAPDAIKAGEIKNQFGRKVAIDAYVKTAQRYRASTDEEQLTNESGETTSHLMGMFYRTLRMVDNGIKPLYVFDGAPPKLKSGELAKRTMRKAEAQEAAEEAKETGTAEDVEKFSRRTVRVTREHNAECKRLLKLMGIPYIDAPTEAEAQCAVLAKEGKVFGAASEDMDTLCFAAPVLLRHLTFSEQRKEPILEIHLDKVLEGLGMEMTQFVDLCILLGCDYLDPIPKVGPNTALKMIRDHGTLEKVVETIESDPKKKYVIPDDWPYLQARDLFFNPDVRPADAPECDFKWTAPDVEGLVRFLVEEKGFSEDRVRNGAARLTKNLKSAQQSRLEGFFKPVAKTEQQKATAKRKAEEKAELAKKKKKEDAKAKRAMGAKPRGAR.

Residues 1-103 (MGIKSLYQII…GELAKRTMRK (103 aa)) are N-domain. Asp34 contributes to the Mg(2+) binding site. A DNA-binding site is contributed by Arg69. Position 85 (Asp85) interacts with Mg(2+). Positions 102–123 (RKAEAQEAAEEAKETGTAEDVE) are disordered. The interval 121 to 252 (DVEKFSRRTV…NTALKMIRDH (132 aa)) is I-domain. Mg(2+) contacts are provided by Glu157, Glu159, Asp178, and Asp180. Glu157 lines the DNA pocket. DNA-binding residues include Gly230 and Asp232. Asp232 contacts Mg(2+). Residues 340-348 (QQSRLEGFF) form an interaction with PCNA region. Residues 349–394 (KPVAKTEQQKATAKRKAEEKAELAKKKKKEDAKAKRAMGAKPRGAR) form a disordered region. Residues 363-382 (RKAEEKAELAKKKKKEDAKA) are compositionally biased toward basic and acidic residues. The segment covering 383–394 (KRAMGAKPRGAR) has biased composition (basic residues).

The protein belongs to the XPG/RAD2 endonuclease family. FEN1 subfamily. Interacts with PCNA. Three molecules of FEN1 bind to one PCNA trimer with each molecule binding to one PCNA monomer. PCNA stimulates the nuclease activity without altering cleavage specificity. Requires Mg(2+) as cofactor. Post-translationally, phosphorylated. Phosphorylation upon DNA damage induces relocalization to the nuclear plasma.

Its subcellular location is the nucleus. It localises to the nucleolus. The protein localises to the nucleoplasm. The protein resides in the mitochondrion. Functionally, structure-specific nuclease with 5'-flap endonuclease and 5'-3' exonuclease activities involved in DNA replication and repair. During DNA replication, cleaves the 5'-overhanging flap structure that is generated by displacement synthesis when DNA polymerase encounters the 5'-end of a downstream Okazaki fragment. It enters the flap from the 5'-end and then tracks to cleave the flap base, leaving a nick for ligation. Also involved in the long patch base excision repair (LP-BER) pathway, by cleaving within the apurinic/apyrimidinic (AP) site-terminated flap. Acts as a genome stabilization factor that prevents flaps from equilibrating into structures that lead to duplications and deletions. Also possesses 5'-3' exonuclease activity on nicked or gapped double-stranded DNA, and exhibits RNase H activity. Also involved in replication and repair of rDNA and in repairing mitochondrial DNA. This Arthroderma otae (strain ATCC MYA-4605 / CBS 113480) (Microsporum canis) protein is Flap endonuclease 1.